Reading from the N-terminus, the 258-residue chain is Regulatory protein RecX (258 aa).

The protein belongs to the RecX family.

The protein localises to the cytoplasm. Its function is as follows. Modulates RecA activity. This is Regulatory protein RecX from Streptococcus pyogenes serotype M12 (strain MGAS2096).